Here is a 162-residue protein sequence, read N- to C-terminus: Phosphopantetheine adenylyltransferase (162 aa).

Residue S9 participates in substrate binding. Residues S9–F10 and H17 contribute to the ATP site. Positions 41, 77, and 91 each coordinate substrate. ATP contacts are provided by residues G92–R94, E102, and Y126–S132.

Belongs to the bacterial CoaD family. As to quaternary structure, homohexamer. The cofactor is Mg(2+).

The protein resides in the cytoplasm. The catalysed reaction is (R)-4'-phosphopantetheine + ATP + H(+) = 3'-dephospho-CoA + diphosphate. The protein operates within cofactor biosynthesis; coenzyme A biosynthesis; CoA from (R)-pantothenate: step 4/5. Reversibly transfers an adenylyl group from ATP to 4'-phosphopantetheine, yielding dephospho-CoA (dPCoA) and pyrophosphate. The sequence is that of Phosphopantetheine adenylyltransferase from Parafrankia sp. (strain EAN1pec).